The following is a 284-amino-acid chain: Small ribosomal subunit protein uS5z (284 aa).

The segment covering 1 to 19 (MAERGGEGGAERGGDRGDF) has biased composition (basic and acidic residues). The disordered stretch occupies residues 1-51 (MAERGGEGGAERGGDRGDFGRGFGGGRGGGRGRDRGPRGRGRRGGRASEET). Gly residues predominate over residues 20–29 (GRGFGGGRGG). Residues 95–158 (LKDEVMKIMP…ILAKLSVVPV (64 aa)) form the S5 DRBM domain.

This sequence belongs to the universal ribosomal protein uS5 family.

In Arabidopsis thaliana (Mouse-ear cress), this protein is Small ribosomal subunit protein uS5z (RPS2A).